The primary structure comprises 186 residues: UPF0301 protein Saro_0683 (186 aa).

The protein belongs to the UPF0301 (AlgH) family.

This is UPF0301 protein Saro_0683 from Novosphingobium aromaticivorans (strain ATCC 700278 / DSM 12444 / CCUG 56034 / CIP 105152 / NBRC 16084 / F199).